The chain runs to 739 residues: MQQTYQYGWIIPFIPLPIPILIGVGLLLFPTATKNLRRMWSFQSVLLLTIVMIFSINLSIQQINSNSIYQYVWSWIINNDFSLEFGYLIDPLTSIMSILITTVGIMVLIYSDNYMAHDQAYLRFFAYMGFFSTSMLGLVTSSNLIQIYIFWELVGMCSYLLIGFWFTRPLAANACQKAFVTNRIGDFGLLLGILGFYWITGSFEFRDLFEIFNNLIYDNEVNSLFVTLCAGLVFAGAVAKSAQFPLHVWLPDAMEGPTPISALIHAATMVAAGIFLVARLIPLFIVIPYIMNFISLIGIITVLLGATLALAQKDIKRGLAFSTMSQLGYMMLALGMGSYRSALFHLITHAYSKALLFLGSGSVIHSMETIVGYSPYKSQNMVLMGGLTKHIPITKNTFLLGTLSLCGIPPLACFWSKDEILNDSWLYSTIFAIIAWATAGLTAFYIFRIYLLTFEGHLSVHFQNYIGKEKVFFYSISLWGRGASKKINNNFSLSTMNNIESSSFLKKKTYPIAENVRNVTRPFITITHFENKKFYSYPYEPDNTMLFPLLILGLFTLFVGSIGIPFNQEGVDLBILSKWLTPSINLLHQKLSNSMDWYEFWKDTVSSVSIAYLGIFIASLLYKPPYSSLQNFDLINSILKRGPKRILWDKIINGVYNWSYNRAYIDSFYTRSFTGGIRGLAKLTHFFDRRIVDGITNGVGVINFFIGEAIKYIGGGRISSYLFFYLTYVSIFLLVFFII.

16 helical membrane passes run 9-29, 40-60, 89-109, 125-145, 147-167, 184-204, 224-244, 258-278, 289-311, 318-338, 354-374, 396-416, 427-447, 546-566, 605-625, and 718-738; these read WIIP…LLLF, WSFQ…NLSI, IDPL…MVLI, FAYM…SNLI, IYIF…FWFT, IGDF…GSFE, LFVT…SAQF, TPIS…FLVA, YIMN…LALA, GLAF…GMGS, ALLF…VGYS, NTFL…CFWS, YSTI…FYIF, LFPL…GIPF, VSSV…YKPP, and ISSY…VFFI.

This sequence belongs to the complex I subunit 5 family. In terms of assembly, NDH is composed of at least 16 different subunits, 5 of which are encoded in the nucleus.

It is found in the plastid. The protein localises to the chloroplast thylakoid membrane. It carries out the reaction a plastoquinone + NADH + (n+1) H(+)(in) = a plastoquinol + NAD(+) + n H(+)(out). The enzyme catalyses a plastoquinone + NADPH + (n+1) H(+)(in) = a plastoquinol + NADP(+) + n H(+)(out). Functionally, NDH shuttles electrons from NAD(P)H:plastoquinone, via FMN and iron-sulfur (Fe-S) centers, to quinones in the photosynthetic chain and possibly in a chloroplast respiratory chain. The immediate electron acceptor for the enzyme in this species is believed to be plastoquinone. Couples the redox reaction to proton translocation, and thus conserves the redox energy in a proton gradient. The sequence is that of NAD(P)H-quinone oxidoreductase subunit 5, chloroplastic (ndhF) from Coffea arabica (Arabian coffee).